Here is a 67-residue protein sequence, read N- to C-terminus: ATP synthase F(0) complex subunit 8 (67 aa).

Residues 8–24 (TWFITIISSMITLFILF) form a helical membrane-spanning segment. Lys54 bears the N6-acetyllysine; alternate mark. Lys54 is modified (N6-succinyllysine; alternate). Lys57 is subject to N6-acetyllysine.

This sequence belongs to the ATPase protein 8 family. In terms of assembly, component of the ATP synthase complex composed at least of ATP5F1A/subunit alpha, ATP5F1B/subunit beta, ATP5MC1/subunit c (homooctomer), MT-ATP6/subunit a, MT-ATP8/subunit 8, ATP5ME/subunit e, ATP5MF/subunit f, ATP5MG/subunit g, ATP5MK/subunit k, ATP5MJ/subunit j, ATP5F1C/subunit gamma, ATP5F1D/subunit delta, ATP5F1E/subunit epsilon, ATP5PF/subunit F6, ATP5PB/subunit b, ATP5PD/subunit d, ATP5PO/subunit OSCP. ATP synthase complex consists of a soluble F(1) head domain (subunits alpha(3) and beta(3)) - the catalytic core - and a membrane F(0) domain - the membrane proton channel (subunits c, a, 8, e, f, g, k and j). These two domains are linked by a central stalk (subunits gamma, delta, and epsilon) rotating inside the F1 region and a stationary peripheral stalk (subunits F6, b, d, and OSCP). Interacts with PRICKLE3.

It is found in the mitochondrion membrane. Its function is as follows. Subunit 8, of the mitochondrial membrane ATP synthase complex (F(1)F(0) ATP synthase or Complex V) that produces ATP from ADP in the presence of a proton gradient across the membrane which is generated by electron transport complexes of the respiratory chain. ATP synthase complex consist of a soluble F(1) head domain - the catalytic core - and a membrane F(1) domain - the membrane proton channel. These two domains are linked by a central stalk rotating inside the F(1) region and a stationary peripheral stalk. During catalysis, ATP synthesis in the catalytic domain of F(1) is coupled via a rotary mechanism of the central stalk subunits to proton translocation. In vivo, can only synthesize ATP although its ATP hydrolase activity can be activated artificially in vitro. Part of the complex F(0) domain. The chain is ATP synthase F(0) complex subunit 8 from Mus musculus (Mouse).